We begin with the raw amino-acid sequence, 138 residues long: MRTLWIVAVLLLGVEGSLVQFEMMIIKVAKRSGLFWYGAYGCYCGWGGQGRPQDATDRCCFVHDCCYGKATDCNPKTVSYTYSVKNGEIICEDDDPCKKQVCECDRVAAVCFRDNIPSYNNNYKRFPAENCREEPEPC.

The N-terminal stretch at 1-16 (MRTLWIVAVLLLGVEG) is a signal peptide. Intrachain disulfides connect cysteine 42–cysteine 131, cysteine 44–cysteine 60, cysteine 59–cysteine 111, cysteine 65–cysteine 138, cysteine 66–cysteine 104, cysteine 73–cysteine 97, and cysteine 91–cysteine 102. Tyrosine 43, glycine 45, and glycine 47 together coordinate Ca(2+). The active site involves histidine 63. Ca(2+) is bound at residue aspartate 64. Residue aspartate 105 is part of the active site.

Ca(2+) is required as a cofactor. As to expression, expressed by the venom gland.

It localises to the secreted. The catalysed reaction is a 1,2-diacyl-sn-glycero-3-phosphocholine + H2O = a 1-acyl-sn-glycero-3-phosphocholine + a fatty acid + H(+). In terms of biological role, snake venom phospholipase A2 (PLA2) that shows very low inhibition of ADP-induced platelet aggregation in platelet-rich plasma of human, rabbit and guinea pig. In vivo, shows efficient edema-inducing activities in rat paws. PLA2 catalyzes the calcium-dependent hydrolysis of the 2-acyl groups in 3-sn-phosphoglycerides. In Crotalus viridis viridis (Prairie rattlesnake), this protein is Acidic phospholipase A2 Cvv-E6f.